Consider the following 349-residue polypeptide: tRNA uridine(34) hydroxylase (349 aa).

In terms of domain architecture, Rhodanese spans 146-240 (DDPDAVFIDM…YARRAREQGL (95 aa)). Catalysis depends on C200, which acts as the Cysteine persulfide intermediate. Residues 316–328 (EEQRRRRAGRENG) are compositionally biased toward basic and acidic residues. The tract at residues 316–349 (EEQRRRRAGRENGNKIFNKSRGRLNTKLGIPDPE) is disordered.

This sequence belongs to the TrhO family.

The enzyme catalyses uridine(34) in tRNA + AH2 + O2 = 5-hydroxyuridine(34) in tRNA + A + H2O. In terms of biological role, catalyzes oxygen-dependent 5-hydroxyuridine (ho5U) modification at position 34 in tRNAs. The protein is tRNA uridine(34) hydroxylase of Enterobacter sp. (strain 638).